A 312-amino-acid chain; its full sequence is Ribosomal protein L11 methyltransferase (312 aa).

Residues T160, G181, D203, and N246 each contribute to the S-adenosyl-L-methionine site.

The protein belongs to the methyltransferase superfamily. PrmA family.

The protein resides in the cytoplasm. It carries out the reaction L-lysyl-[protein] + 3 S-adenosyl-L-methionine = N(6),N(6),N(6)-trimethyl-L-lysyl-[protein] + 3 S-adenosyl-L-homocysteine + 3 H(+). In terms of biological role, methylates ribosomal protein L11. The chain is Ribosomal protein L11 methyltransferase from Staphylococcus aureus (strain COL).